We begin with the raw amino-acid sequence, 32 residues long: SKRLSNGCFGLKLDRIGAMSGLGCWRLINESK.

C8 and C24 are disulfide-bonded.

The protein belongs to the natriuretic peptide family. Snake NP subfamily. In terms of tissue distribution, expressed by the venom gland.

The protein localises to the secreted. Its function is as follows. Snake venom natriuretic peptide that exhibits hypotensive and vasodepressor activity in rats. This is Natriuretic peptide Coa_NP1 from Crotalus lutosus abyssus (Grand Canyon rattlesnake).